Reading from the N-terminus, the 510-residue chain is UDP-N-acetylmuramoyl-tripeptide--D-alanyl-D-alanine ligase (510 aa).

136–142 lines the ATP pocket; sequence GSSGKTS.

It belongs to the MurCDEF family. MurF subfamily.

Its subcellular location is the cytoplasm. It carries out the reaction D-alanyl-D-alanine + UDP-N-acetyl-alpha-D-muramoyl-L-alanyl-gamma-D-glutamyl-meso-2,6-diaminopimelate + ATP = UDP-N-acetyl-alpha-D-muramoyl-L-alanyl-gamma-D-glutamyl-meso-2,6-diaminopimeloyl-D-alanyl-D-alanine + ADP + phosphate + H(+). The protein operates within cell wall biogenesis; peptidoglycan biosynthesis. In terms of biological role, involved in cell wall formation. Catalyzes the final step in the synthesis of UDP-N-acetylmuramoyl-pentapeptide, the precursor of murein. This Mycobacterium bovis (strain ATCC BAA-935 / AF2122/97) protein is UDP-N-acetylmuramoyl-tripeptide--D-alanyl-D-alanine ligase.